A 94-amino-acid chain; its full sequence is DNA-binding protein HU (94 aa).

The interval 55–94 is disordered; that stretch reads RAERPGRNPKTGEPIMIAASNNPSFKPGKALKDAVKSSAG. Basic and acidic residues predominate over residues 84–94; the sequence is ALKDAVKSSAG.

The protein belongs to the bacterial histone-like protein family.

Functionally, histone-like DNA-binding protein which is capable of wrapping DNA to stabilize it, and thus to prevent its denaturation under extreme environmental conditions. This chain is DNA-binding protein HU (hup), found in Xylella fastidiosa (strain Temecula1 / ATCC 700964).